A 426-amino-acid polypeptide reads, in one-letter code: Putative 3-oxoacyl-[acyl-carrier-protein] synthase, mitochondrial (426 aa).

The N-terminal 18 residues, 1–18 (MKRVVITGLGAVTPLGNG), are a transit peptide targeting the mitochondrion. The 405-residue stretch at 19-423 (VKTNWRNLIQ…GTNASLCFKK (405 aa)) folds into the Ketosynthase family 3 (KS3) domain. Catalysis depends on for beta-ketoacyl synthase activity residues C170, H311, and H351.

It belongs to the thiolase-like superfamily. Beta-ketoacyl-ACP synthases family.

Its subcellular location is the mitochondrion. It carries out the reaction a fatty acyl-[ACP] + malonyl-[ACP] + H(+) = a 3-oxoacyl-[ACP] + holo-[ACP] + CO2. The catalysed reaction is butanoyl-[ACP] + malonyl-[ACP] + H(+) = 3-oxohexanoyl-[ACP] + holo-[ACP] + CO2. It catalyses the reaction hexanoyl-[ACP] + malonyl-[ACP] + H(+) = 3-oxooctanoyl-[ACP] + holo-[ACP] + CO2. The enzyme catalyses octanoyl-[ACP] + malonyl-[ACP] + H(+) = 3-oxodecanoyl-[ACP] + holo-[ACP] + CO2. It carries out the reaction decanoyl-[ACP] + malonyl-[ACP] + H(+) = 3-oxododecanoyl-[ACP] + holo-[ACP] + CO2. The catalysed reaction is dodecanoyl-[ACP] + malonyl-[ACP] + H(+) = 3-oxotetradecanoyl-[ACP] + holo-[ACP] + CO2. It catalyses the reaction tetradecanoyl-[ACP] + malonyl-[ACP] + H(+) = 3-oxohexadecanoyl-[ACP] + holo-[ACP] + CO2. The protein operates within lipid metabolism; fatty acid biosynthesis. In terms of biological role, may play a role in the biosynthesis of lipoic acid as well as longer chain fatty acids required for optimal mitochondrial function. The polypeptide is Putative 3-oxoacyl-[acyl-carrier-protein] synthase, mitochondrial (Schizosaccharomyces pombe (strain 972 / ATCC 24843) (Fission yeast)).